Consider the following 491-residue polypeptide: Homeobox protein unplugged (491 aa).

Disordered regions lie at residues M1 to T23, S46 to E69, A124 to H146, and F227 to A329. The segment covering G254 to L264 has biased composition (polar residues). Over residues G305–S316 the composition is skewed to gly residues. The segment at residues S323 to K382 is a DNA-binding region (homeobox).

The protein localises to the nucleus. Its function is as follows. Plays a regulatory role in neural branching of the tracheae: segment-specific aspects of these neural branching patterns appear to be generated by homeotic regulation of expression. This Drosophila pseudoobscura pseudoobscura (Fruit fly) protein is Homeobox protein unplugged.